Here is a 525-residue protein sequence, read N- to C-terminus: GMP synthase [glutamine-hydrolyzing] (525 aa).

The Glutamine amidotransferase type-1 domain maps to 9 to 207 (RILILDFGSQ…VLGICGCEAL (199 aa)). Cys-86 acts as the Nucleophile in catalysis. Active-site residues include His-181 and Glu-183. The GMPS ATP-PPase domain maps to 208 to 400 (WTSATIIEDA…LGLPYDMLYR (193 aa)). Position 235-241 (235-241 (SGGVDSS)) interacts with ATP.

In terms of assembly, homodimer.

It carries out the reaction XMP + L-glutamine + ATP + H2O = GMP + L-glutamate + AMP + diphosphate + 2 H(+). Its pathway is purine metabolism; GMP biosynthesis; GMP from XMP (L-Gln route): step 1/1. Its function is as follows. Catalyzes the synthesis of GMP from XMP. This chain is GMP synthase [glutamine-hydrolyzing], found in Yersinia pseudotuberculosis serotype IB (strain PB1/+).